The sequence spans 442 residues: MSSSNNQPNFAPFRDEKNNSLVVILGAQWGDEGKGKIVDLLASQADIVCRCQGGNNAGHTVVANGKTYHFHLLPSGIIQSNCTSVIGNGVVIHLPGLFAEIEAIEKNGVQDCWSKLKISDRAHLVFDFHQEADGLLELEKGDSKIGTTKKGIGPAYSTKASRVGLRVCDLMGDFEDFTKKFKNLVKGYRKRFSELEVDVEKELERYKRYADIIRPSIEDTVFFLSEELKKGNKNIIVEGANAVMLDLDFGTYPYVTSSSCGIGGVCTGLGLPPSTIRNVVGICKAYITRVGAGDFPTFLDSDIGTKLQDIGQEFGTTTGRRRRCGWLDIVVLDYVNRISGLTSIAVTKLDVMDTFEEVKIGTAYIHNGQKLKSFPADHSILSEVEVEYITMPGWKQNISLCRKFSDLPENAQAYILKIEELSGIPVQFVGVGKSRDATIRRF.

GTP-binding positions include 30 to 36 (GDEGKGK) and 58 to 60 (GHT). The active-site Proton acceptor is the Asp-31. Mg(2+) is bound by residues Asp-31 and Gly-58. IMP-binding positions include 31-34 (DEGK), 56-59 (NAGH), Thr-148, Arg-162, Asn-241, Thr-256, and Arg-320. His-59 (proton donor) is an active-site residue. Position 316–322 (316–322 (TTTGRRR)) interacts with substrate. Residues Arg-322, 348 to 350 (KLD), and 430 to 432 (GVG) contribute to the GTP site.

It belongs to the adenylosuccinate synthetase family. As to quaternary structure, homodimer. Mg(2+) serves as cofactor.

Its subcellular location is the cytoplasm. It catalyses the reaction IMP + L-aspartate + GTP = N(6)-(1,2-dicarboxyethyl)-AMP + GDP + phosphate + 2 H(+). It participates in purine metabolism; AMP biosynthesis via de novo pathway; AMP from IMP: step 1/2. Plays an important role in the de novo pathway and in the salvage pathway of purine nucleotide biosynthesis. Catalyzes the first committed step in the biosynthesis of AMP from IMP. In Trichoplax adhaerens (Trichoplax reptans), this protein is Adenylosuccinate synthetase.